Here is a 203-residue protein sequence, read N- to C-terminus: Membrane-spanning 4-domains subfamily A member 13 (203 aa).

The next 4 helical transmembrane spans lie at 15–35 (VLGVIQIMIGIYHVLMWYFLL), 56–76 (MGTSLWGFAFVISGAFTVKAA), 84–104 (ILCTMSLNILCIIITIVAASL), and 141–161 (FAIALLYSISSCAYLPLSSIV).

It belongs to the MS4A family.

It localises to the membrane. May be involved in signal transduction as a component of a multimeric receptor complex. This chain is Membrane-spanning 4-domains subfamily A member 13 (Ms4a13), found in Mus musculus (Mouse).